A 419-amino-acid chain; its full sequence is MSVQLDPSALQKMAEVAAAAEQQSNEPMTVDEEYELWKSNVPMLYDFVSETRLTWPTLTVEWLPQKNLVAARTRQQLILGTHTSGEEQNYLKIGAVDLPVEVTENSKKDREIDEEDEDMVLSNVKIVKKFPHDGEITRARYMPQDDNIIATINGEGKIFIYDRSKNGVEALLSTLEYHTENGYGLAFNANEKYSLLSGSDDSNIALWDISNFEKNIKPTITFEDAHTDIINDVKWHSSEAHIFGSVSEDSTMKLFDKRSSQIIHNINTKKPYNTLAFSPFSSNLFAAAGTDNLVYLYDIRDVSNPLYAMTGHEDAVTAIEFDPNNDGILYSSGSDRRTIVWDLQEIGAEQTQDEIEDGPPEVLMIHAGHKTSINDIAVNPNINWLVASAEEDNIVQIWKCSSNIPRIGGEPEVDLSILD.

5 WD repeats span residues 131-171, 177-217, 225-265, 267-307, and 311-351; these read PHDG…VEAL, YHTE…KNIK, AHTD…IIHN, NTKK…NPLY, and GHED…AEQT. An interaction with the histone H4 N-terminus region spans residues 353 to 357; the sequence is DEIED. Residues 368 to 408 form a WD 6 repeat; that stretch reads GHKTSINDIAVNPNINWLVASAEEDNIVQIWKCSSNIPRIG.

This sequence belongs to the WD repeat RBAP46/RBAP48/MSI1 family. In terms of assembly, component of the HAT-B complex composed of at least HAT1 and HAT2. The HAT-B complex binds to histone H4 tail.

Its subcellular location is the cytoplasm. The protein localises to the nucleus. Functionally, regulatory subunit of the histone acetylase B (HAT-B) complex. The complex acetylates Lys-12 of histone H4 which is required for telomeric silencing. The polypeptide is Histone acetyltransferase type B subunit 2 (HAT2) (Candida glabrata (strain ATCC 2001 / BCRC 20586 / JCM 3761 / NBRC 0622 / NRRL Y-65 / CBS 138) (Yeast)).